Consider the following 472-residue polypeptide: Ribosomal protein uS12 methylthiotransferase RimO (472 aa).

One can recognise an MTTase N-terminal domain in the interval 33 to 143 (NRIGFVSLGC…VLKHVHKYVP (111 aa)). [4Fe-4S] cluster is bound by residues Cys42, Cys78, Cys107, Cys175, Cys179, and Cys182. Positions 161–398 (LTPKHYAYLK…MEVQAEISAE (238 aa)) constitute a Radical SAM core domain. A TRAM domain is found at 401–467 (ARFVGRTLDI…EHDLWAEVVD (67 aa)).

Belongs to the methylthiotransferase family. RimO subfamily. The cofactor is [4Fe-4S] cluster.

It localises to the cytoplasm. The enzyme catalyses L-aspartate(89)-[ribosomal protein uS12]-hydrogen + (sulfur carrier)-SH + AH2 + 2 S-adenosyl-L-methionine = 3-methylsulfanyl-L-aspartate(89)-[ribosomal protein uS12]-hydrogen + (sulfur carrier)-H + 5'-deoxyadenosine + L-methionine + A + S-adenosyl-L-homocysteine + 2 H(+). Functionally, catalyzes the methylthiolation of an aspartic acid residue of ribosomal protein uS12. This chain is Ribosomal protein uS12 methylthiotransferase RimO, found in Shewanella baltica (strain OS185).